Here is a 426-residue protein sequence, read N- to C-terminus: Transcriptional enhancer factor TEF-1 (426 aa).

Residue methionine 1 is modified to N-acetylmethionine. The segment covering 1 to 12 (MEPSSWSGSESP) has biased composition (polar residues). The segment at 1–31 (MEPSSWSGSESPAENMERMSDSADKPIDNDA) is disordered. Phosphoserine is present on serine 11. Positions 15–28 (NMERMSDSADKPID) are enriched in basic and acidic residues. The segment at residues 28–104 (DNDAEGVWSP…QVLARRKSRD (77 aa)) is a DNA-binding region (TEA). Lysine 108 carries the post-translational modification N6-lactoyllysine. The interval 167–426 (GSSQDVKPFV…QHHIYRLVKD (260 aa)) is transcriptional activation.

Interacts with YAP1 and WWTR1/TAZ. Post-translationally, lactylation by AARS1 promotes nuclear localization and stabilization of YAP1, leading to increased Hippo signaling pathway. Delactylated by SIRT1. Preferentially expressed in skeletal muscle. Lower levels in pancreas, placenta, and heart.

It is found in the nucleus. In terms of biological role, transcription factor which plays a key role in the Hippo signaling pathway, a pathway involved in organ size control and tumor suppression by restricting proliferation and promoting apoptosis. The core of this pathway is composed of a kinase cascade wherein MST1/MST2, in complex with its regulatory protein SAV1, phosphorylates and activates LATS1/2 in complex with its regulatory protein MOB1, which in turn phosphorylates and inactivates YAP1 oncoprotein and WWTR1/TAZ. Acts by mediating gene expression of YAP1 and WWTR1/TAZ, thereby regulating cell proliferation, migration and epithelial mesenchymal transition (EMT) induction. Binds specifically and cooperatively to the SPH and GT-IIC 'enhansons' (5'-GTGGAATGT-3') and activates transcription in vivo in a cell-specific manner. The activation function appears to be mediated by a limiting cell-specific transcriptional intermediary factor (TIF). Involved in cardiac development. Binds to the M-CAT motif. The sequence is that of Transcriptional enhancer factor TEF-1 (TEAD1) from Homo sapiens (Human).